We begin with the raw amino-acid sequence, 470 residues long: Light-independent protochlorophyllide reductase subunit N (470 aa).

Positions 22, 47, and 107 each coordinate [4Fe-4S] cluster.

The protein belongs to the BchN/ChlN family. In terms of assembly, protochlorophyllide reductase is composed of three subunits; ChlL, ChlN and ChlB. Forms a heterotetramer of two ChlB and two ChlN subunits. The cofactor is [4Fe-4S] cluster.

It is found in the plastid. Its subcellular location is the chloroplast. It carries out the reaction chlorophyllide a + oxidized 2[4Fe-4S]-[ferredoxin] + 2 ADP + 2 phosphate = protochlorophyllide a + reduced 2[4Fe-4S]-[ferredoxin] + 2 ATP + 2 H2O. It functions in the pathway porphyrin-containing compound metabolism; chlorophyll biosynthesis (light-independent). Functionally, component of the dark-operative protochlorophyllide reductase (DPOR) that uses Mg-ATP and reduced ferredoxin to reduce ring D of protochlorophyllide (Pchlide) to form chlorophyllide a (Chlide). This reaction is light-independent. The NB-protein (ChlN-ChlB) is the catalytic component of the complex. The polypeptide is Light-independent protochlorophyllide reductase subunit N (Pinus koraiensis (Korean pine)).